The primary structure comprises 362 residues: 3-dehydroquinate synthase (362 aa).

Residues 72-77, 106-110, 130-131, Lys143, and Lys152 contribute to the NAD(+) site; these read DGEAHK, GVIGD, and TT. Positions 185, 248, and 265 each coordinate Zn(2+).

This sequence belongs to the sugar phosphate cyclases superfamily. Dehydroquinate synthase family. Requires Co(2+) as cofactor. Zn(2+) serves as cofactor. It depends on NAD(+) as a cofactor.

Its subcellular location is the cytoplasm. The catalysed reaction is 7-phospho-2-dehydro-3-deoxy-D-arabino-heptonate = 3-dehydroquinate + phosphate. It participates in metabolic intermediate biosynthesis; chorismate biosynthesis; chorismate from D-erythrose 4-phosphate and phosphoenolpyruvate: step 2/7. Its function is as follows. Catalyzes the conversion of 3-deoxy-D-arabino-heptulosonate 7-phosphate (DAHP) to dehydroquinate (DHQ). The protein is 3-dehydroquinate synthase of Laribacter hongkongensis (strain HLHK9).